Reading from the N-terminus, the 100-residue chain is Urease subunit gamma (100 aa).

It belongs to the urease gamma subunit family. In terms of assembly, heterotrimer of UreA (gamma), UreB (beta) and UreC (alpha) subunits. Three heterotrimers associate to form the active enzyme.

Its subcellular location is the cytoplasm. It carries out the reaction urea + 2 H2O + H(+) = hydrogencarbonate + 2 NH4(+). Its pathway is nitrogen metabolism; urea degradation; CO(2) and NH(3) from urea (urease route): step 1/1. The sequence is that of Urease subunit gamma from Staphylococcus aureus (strain N315).